Here is a 202-residue protein sequence, read N- to C-terminus: Recombination protein RecR (202 aa).

A C4-type zinc finger spans residues 57-72 (CRDCRTFTEDDICAVC). Residues 81 to 176 (GQICVVESPA…PATRIAHGVP (96 aa)) form the Toprim domain.

It belongs to the RecR family.

May play a role in DNA repair. It seems to be involved in an RecBC-independent recombinational process of DNA repair. It may act with RecF and RecO. The polypeptide is Recombination protein RecR (Photobacterium profundum (strain SS9)).